The sequence spans 587 residues: 2-succinyl-5-enolpyruvyl-6-hydroxy-3-cyclohexene-1-carboxylate synthase (587 aa).

This sequence belongs to the TPP enzyme family. MenD subfamily. In terms of assembly, homodimer. The cofactor is Mg(2+). Mn(2+) serves as cofactor. Requires thiamine diphosphate as cofactor.

The catalysed reaction is isochorismate + 2-oxoglutarate + H(+) = 5-enolpyruvoyl-6-hydroxy-2-succinyl-cyclohex-3-ene-1-carboxylate + CO2. The protein operates within quinol/quinone metabolism; 1,4-dihydroxy-2-naphthoate biosynthesis; 1,4-dihydroxy-2-naphthoate from chorismate: step 2/7. It functions in the pathway cofactor biosynthesis; phylloquinone biosynthesis. In terms of biological role, catalyzes the thiamine diphosphate-dependent decarboxylation of 2-oxoglutarate and the subsequent addition of the resulting succinic semialdehyde-thiamine pyrophosphate anion to isochorismate to yield 2-succinyl-5-enolpyruvyl-6-hydroxy-3-cyclohexene-1-carboxylate (SEPHCHC). The protein is 2-succinyl-5-enolpyruvyl-6-hydroxy-3-cyclohexene-1-carboxylate synthase of Prochlorococcus marinus (strain AS9601).